We begin with the raw amino-acid sequence, 944 residues long: MDTQIAITGVAVGKEINNDNSKTDQKVSLPKADVPCIDKATQTIIEGCSKDDPRLSYPTKLETTEKGKTKRNSFACVCCHSLKQKCEPSDVNDIYRKPCRRCLKHKKLCKFDLSKRTRKRKPRSRSPTPFESPMVNVSTKSKGPTDSEESSLKDGTSYLASFPSDPNAKQFPNSRTVLPGLQQSLSDLWSTLSQPPSYGAREAETTSTGEITTNNHTKSNGSVPTNPAVLASNDEHTNISDAPVIYSTYNSPVPISSAPTSINSEALFKHRPKIVGDEETQNVKVKRQKKSYSRHMTRSFRKQLQSLIISQKGKIRDISMKLDTWSKQWNDLVEKSMFLPTIADPVSVGIISHEEATLRLHLYKTEISYLSKLPFIKVEENVSVDELRKKKPILFSVIMSCVSIVLTPKQTTRGTIMKLDSFVLNLITNQIFKANNKSIEIIESLSTLCLWYNFFEWSSKTRYHIFNYICCCLTRDLGPTYVNRSFGMFSDEDPKRFKSPLELYSNGASLTLLVYISALNISIFLRQSIQARWSHVTEKACEDLVKETKKSRHYDNDKLLLDSADDPILVQFAKMNHVLENIHTHLHERDLNDDEFDDPIFTKKYLNKLMEKYHKQLQEIFTKLDRNRPRVIAFYYSVEAYLYQYKLAVFIGEMSHTINEKVELPREIMDDFVKCYHCCKSALEEFSKLEPILITSLPLFHTSRIIYTVGMLLLKLRYSVVAIPSFHDLMPLTDDAIALVIGVNNLLEKTSELYPFNNSLYKFRYVIALFCQTYANKVIDVADRYNAEREKLKEKQVIDEVSNGHDGTKPINAYVTESQKMPTEEDPIIDNNTNQNITAVPDEMLPVYSRVRDDTAAMNLNINSTSYMNESPHEHRESMTGTTLLPPPFISNDVTNSADSTNIKPSPSSSVDNLNDYLTDINSLAWGVNSLNDEFWTDLFMNDI.

Positions 76 to 109 form a DNA-binding region, zn(2)-C6 fungal-type; that stretch reads CVCCHSLKQKCEPSDVNDIYRKPCRRCLKHKKLC. Disordered regions lie at residues 114-171 and 197-225; these read SKRT…AKQF and SYGA…SVPT. Threonine 128 carries the post-translational modification Phosphothreonine. 2 stretches are compositionally biased toward polar residues: residues 135-144 and 205-225; these read VNVSTKSKGP and TTST…SVPT.

As to quaternary structure, homodimer. Post-translationally, phosphorylation is required for PDR12 induction.

The protein localises to the nucleus. Functionally, transcription factor which binds to a weak acid response element (WARE) to mediate stress induction of PDR12 and FUN34, encoding an acid transporter and a putative ammonia transporter, respectively. The chain is Weak acid resistance protein 1 (WAR1) from Saccharomyces cerevisiae (strain ATCC 204508 / S288c) (Baker's yeast).